The chain runs to 339 residues: Ribosomal RNA small subunit methyltransferase C (339 aa).

The protein belongs to the methyltransferase superfamily. RsmC family. As to quaternary structure, monomer.

The protein resides in the cytoplasm. It catalyses the reaction guanosine(1207) in 16S rRNA + S-adenosyl-L-methionine = N(2)-methylguanosine(1207) in 16S rRNA + S-adenosyl-L-homocysteine + H(+). Specifically methylates the guanine in position 1207 of 16S rRNA in the 30S particle. The sequence is that of Ribosomal RNA small subunit methyltransferase C from Aliivibrio fischeri (strain ATCC 700601 / ES114) (Vibrio fischeri).